We begin with the raw amino-acid sequence, 396 residues long: S-adenosylmethionine synthase (396 aa).

His16 contacts ATP. Position 18 (Asp18) interacts with Mg(2+). Glu44 contributes to the K(+) binding site. 2 residues coordinate L-methionine: Glu57 and Gln100. Residues 100 to 110 (QSVDIAQGVDR) are flexible loop. Residues 165–167 (DAK), 231–232 (KF), Asp240, 246–247 (RK), Ala263, and Lys267 each bind ATP. Asp240 is an L-methionine binding site. Position 271 (Lys271) interacts with L-methionine.

Belongs to the AdoMet synthase family. In terms of assembly, homotetramer; dimer of dimers. Requires Mg(2+) as cofactor. K(+) is required as a cofactor.

It localises to the cytoplasm. It carries out the reaction L-methionine + ATP + H2O = S-adenosyl-L-methionine + phosphate + diphosphate. It functions in the pathway amino-acid biosynthesis; S-adenosyl-L-methionine biosynthesis; S-adenosyl-L-methionine from L-methionine: step 1/1. Functionally, catalyzes the formation of S-adenosylmethionine (AdoMet) from methionine and ATP. The overall synthetic reaction is composed of two sequential steps, AdoMet formation and the subsequent tripolyphosphate hydrolysis which occurs prior to release of AdoMet from the enzyme. The sequence is that of S-adenosylmethionine synthase from Marinobacter nauticus (strain ATCC 700491 / DSM 11845 / VT8) (Marinobacter aquaeolei).